The primary structure comprises 983 residues: RNA-directed RNA polymerase (983 aa).

Residues Thr-579 to Ser-701 enclose the RdRp catalytic domain. The interval Glu-879 to Val-983 is disordered. The segment covering Gly-883–Gly-899 has biased composition (polar residues). Basic and acidic residues predominate over residues Ala-914–Asp-937. A compositionally biased stretch (low complexity) spans Ser-943–Gly-960.

The protein belongs to the nodaviridae RNA polymerase family.

It catalyses the reaction RNA(n) + a ribonucleoside 5'-triphosphate = RNA(n+1) + diphosphate. Functionally, RNA-dependent RNA polymerase which replicates the viral genome composed of 2 RNA segments, RNA1 and RNA2. This is RNA-directed RNA polymerase from Dicentrarchus labrax (European seabass).